The chain runs to 144 residues: Globin-1 (144 aa).

Residues 1–141 form the Globin domain; it reads VSANDIKNVQ…ILHQMSSYFA (141 aa). H89 contributes to the heme b binding site.

The protein belongs to the globin family. As to quaternary structure, homodimer.

This chain is Globin-1, found in Phreagena soyoae (Deep-sea cold-seep clam).